The chain runs to 371 residues: Bifunctional enzyme IspD/IspF (371 aa).

A 2-C-methyl-D-erythritol 4-phosphate cytidylyltransferase region spans residues 1–210; sequence MSEISLIMLA…LDLPTPSFEI (210 aa). Positions 211-371 are 2-C-methyl-D-erythritol 2,4-cyclodiphosphate synthase; that stretch reads FTGNGFDVHE…NLKYFDWTRL (161 aa). Positions 217 and 219 each coordinate a divalent metal cation. 4-CDP-2-C-methyl-D-erythritol 2-phosphate is bound by residues 217-219 and 243-244; these read DVH and HS. H251 is a binding site for a divalent metal cation. Residues 265–267, 270–274, 341–344, F348, and R351 each bind 4-CDP-2-C-methyl-D-erythritol 2-phosphate; these read DIG, YPDTD, and TTTE.

In the N-terminal section; belongs to the IspD/TarI cytidylyltransferase family. IspD subfamily. It in the C-terminal section; belongs to the IspF family. A divalent metal cation serves as cofactor.

It catalyses the reaction 2-C-methyl-D-erythritol 4-phosphate + CTP + H(+) = 4-CDP-2-C-methyl-D-erythritol + diphosphate. The catalysed reaction is 4-CDP-2-C-methyl-D-erythritol 2-phosphate = 2-C-methyl-D-erythritol 2,4-cyclic diphosphate + CMP. It functions in the pathway isoprenoid biosynthesis; isopentenyl diphosphate biosynthesis via DXP pathway; isopentenyl diphosphate from 1-deoxy-D-xylulose 5-phosphate: step 2/6. It participates in isoprenoid biosynthesis; isopentenyl diphosphate biosynthesis via DXP pathway; isopentenyl diphosphate from 1-deoxy-D-xylulose 5-phosphate: step 4/6. Bifunctional enzyme that catalyzes the formation of 4-diphosphocytidyl-2-C-methyl-D-erythritol from CTP and 2-C-methyl-D-erythritol 4-phosphate (MEP) (IspD), and catalyzes the conversion of 4-diphosphocytidyl-2-C-methyl-D-erythritol 2-phosphate (CDP-ME2P) to 2-C-methyl-D-erythritol 2,4-cyclodiphosphate (ME-CPP) with a corresponding release of cytidine 5-monophosphate (CMP) (IspF). This Campylobacter jejuni subsp. jejuni serotype O:23/36 (strain 81-176) protein is Bifunctional enzyme IspD/IspF.